Here is a 495-residue protein sequence, read N- to C-terminus: Glycerol kinase (495 aa).

Threonine 11 serves as a coordination point for ADP. Positions 11, 12, and 13 each coordinate ATP. Threonine 11 serves as a coordination point for sn-glycerol 3-phosphate. ADP is bound at residue arginine 15. Sn-glycerol 3-phosphate contacts are provided by arginine 81, glutamate 82, tyrosine 133, and aspartate 242. Residues arginine 81, glutamate 82, tyrosine 133, aspartate 242, and glutamine 243 each coordinate glycerol. Residues threonine 264 and glycine 307 each coordinate ADP. ATP contacts are provided by threonine 264, glycine 307, glutamine 311, and glycine 409. Positions 409 and 413 each coordinate ADP.

The protein belongs to the FGGY kinase family.

The catalysed reaction is glycerol + ATP = sn-glycerol 3-phosphate + ADP + H(+). The protein operates within polyol metabolism; glycerol degradation via glycerol kinase pathway; sn-glycerol 3-phosphate from glycerol: step 1/1. With respect to regulation, inhibited by fructose 1,6-bisphosphate (FBP). Key enzyme in the regulation of glycerol uptake and metabolism. Catalyzes the phosphorylation of glycerol to yield sn-glycerol 3-phosphate. This Borrelia hermsii (strain HS1 / DAH) protein is Glycerol kinase.